Here is a 493-residue protein sequence, read N- to C-terminus: GTPase Der (493 aa).

The region spanning 3–166 (PVIALVGRPN…EALGIFPKDN (164 aa)) is the EngA-type G 1 domain. Residues 9–16 (GRPNVGKS), 56–60 (DTGGI), and 118–121 (NKVD) contribute to the GTP site. Positions 166–195 (NAEEEGEGEPASEEVAEGEEPTRIPGPSEK) are disordered. The span at 167-184 (AEEEGEGEPASEEVAEGE) shows a compositional bias: acidic residues. The 174-residue stretch at 198-371 (IKIAIIGRPN…SVQESFRSAV (174 aa)) folds into the EngA-type G 2 domain. Residues 204 to 211 (GRPNVGKS), 251 to 255 (DTAGV), and 316 to 319 (NKWD) each bind GTP. Residues 372–456 (TRWPTSRLTS…PIRIEYKGGE (85 aa)) enclose the KH-like domain. Positions 454–463 (GGENPYEGKK) are enriched in basic and acidic residues. The tract at residues 454–493 (GGENPYEGKKNSLTARQVNKKRRLMSHHKKAEKKKKDKRR) is disordered. Basic residues predominate over residues 471–493 (VNKKRRLMSHHKKAEKKKKDKRR).

The protein belongs to the TRAFAC class TrmE-Era-EngA-EngB-Septin-like GTPase superfamily. EngA (Der) GTPase family. Associates with the 50S ribosomal subunit.

GTPase that plays an essential role in the late steps of ribosome biogenesis. This chain is GTPase Der, found in Pseudomonas aeruginosa (strain UCBPP-PA14).